A 222-amino-acid polypeptide reads, in one-letter code: 7-cyano-7-deazaguanine synthase (222 aa).

Residue 14 to 24 (FSGGQDSTTCL) coordinates ATP. The Zn(2+) site is built by Cys-192, Cys-201, Cys-204, and Cys-207.

It belongs to the QueC family. Homodimer. It depends on Zn(2+) as a cofactor.

The enzyme catalyses 7-carboxy-7-deazaguanine + NH4(+) + ATP = 7-cyano-7-deazaguanine + ADP + phosphate + H2O + H(+). Its pathway is purine metabolism; 7-cyano-7-deazaguanine biosynthesis. Functionally, catalyzes the ATP-dependent conversion of 7-carboxy-7-deazaguanine (CDG) to 7-cyano-7-deazaguanine (preQ(0)). In Clostridium acetobutylicum (strain ATCC 824 / DSM 792 / JCM 1419 / IAM 19013 / LMG 5710 / NBRC 13948 / NRRL B-527 / VKM B-1787 / 2291 / W), this protein is 7-cyano-7-deazaguanine synthase.